We begin with the raw amino-acid sequence, 312 residues long: Structure-specific endonuclease subunit SLX1 (312 aa).

In terms of domain architecture, GIY-YIG spans 9–92 (DFYGCYLLQS…QHGYQTRYIK (84 aa)). An SLX1-type zinc finger spans residues 219-282 (CQFCNKIIKH…IPQSPKCPKC (64 aa)).

It belongs to the SLX1 family. In terms of assembly, forms a heterodimer with SLX4. Requires a divalent metal cation as cofactor.

Its subcellular location is the nucleus. Functionally, catalytic subunit of the SLX1-SLX4 structure-specific endonuclease that resolves DNA secondary structures generated during DNA repair and recombination. Has endonuclease activity towards branched DNA substrates, introducing single-strand cuts in duplex DNA close to junctions with ss-DNA. The protein is Structure-specific endonuclease subunit SLX1 of Candida glabrata (strain ATCC 2001 / BCRC 20586 / JCM 3761 / NBRC 0622 / NRRL Y-65 / CBS 138) (Yeast).